Here is an 811-residue protein sequence, read N- to C-terminus: Mitochondrial intermediate peptidase (811 aa).

A mitochondrion-targeting transit peptide spans 1–25 (MRSGSRLSNYLVRLSGRVSFTQKRS). The disordered stretch occupies residues 423-450 (TENGEKASTDTSTSTTTSTTTTDSTTTT). Residues 431–450 (TDTSTSTTTSTTTTDSTTTT) are compositionally biased toward low complexity. A Zn(2+)-binding site is contributed by histidine 593. Glutamate 594 is an active-site residue. Zn(2+) is bound by residues histidine 597 and histidine 600.

It belongs to the peptidase M3 family. Zn(2+) serves as cofactor.

It is found in the mitochondrion matrix. It carries out the reaction Release of an N-terminal octapeptide as second stage of processing of some proteins imported into the mitochondrion.. Functionally, cleaves proteins, imported into the mitochondrion, to their mature size. While most mitochondrial precursor proteins are processed to the mature form in one step by mitochondrial processing peptidase (MPP), the sequential cleavage by MIP of an octapeptide after initial processing by MPP is a required step for a subgroup of nuclear-encoded precursor proteins destined for the matrix or the inner membrane. The sequence is that of Mitochondrial intermediate peptidase (OCT1) from Lodderomyces elongisporus (strain ATCC 11503 / CBS 2605 / JCM 1781 / NBRC 1676 / NRRL YB-4239) (Yeast).